The primary structure comprises 263 residues: Bidirectional sugar transporter SWEET3 (263 aa).

Topologically, residues 1–7 are extracellular; sequence MGDKLRL. The helical transmembrane segment at 8-28 threads the bilayer; that stretch reads SIGILGNGASLLLYTAPIVTF. One can recognise a MtN3/slv 1 domain in the interval 9 to 97; the sequence is IGILGNGASL…FIYFYYASPK (89 aa). The Cytoplasmic portion of the chain corresponds to 29–42; sequence SRVFKKKSTEEFSC. The helical transmembrane segment at 43-63 threads the bilayer; the sequence is FPYVMTLFNCLIYTWYGLPIV. Over 64–71 the chain is Extracellular; it reads SHLWENLP. The helical transmembrane segment at 72-92 threads the bilayer; that stretch reads LVTINGVGILLESIFIFIYFY. The Cytoplasmic portion of the chain corresponds to 93–103; sequence YASPKEKIKVG. A helical transmembrane segment spans residues 104–124; it reads VTFVPVIVGFGLTTAISALVF. The Extracellular segment spans residues 125 to 132; the sequence is DDHRHRKS. A helical membrane pass occupies residues 133–153; the sequence is FVGSVGLVASISMYGSPLVVM. A MtN3/slv 2 domain is found at 133–217; it reads FVGSVGLVAS…ILYFKYKNKK (85 aa). The Cytoplasmic portion of the chain corresponds to 154-165; it reads KKVIETRSVEYM. A helical membrane pass occupies residues 166-186; the sequence is PFYLSFFSFLASSLWLAYGLL. Residues 187-190 lie on the Extracellular side of the membrane; the sequence is SHDL. The helical transmembrane segment at 191-211 threads the bilayer; it reads FLASPNMVATPLGILQLILYF. At 212–263 the chain is on the cytoplasmic side; sequence KYKNKKDLAPTTMVITKRNDHDDKNKATLEFVVDVDRNSDTNEKNSNNASSI.

It belongs to the SWEET sugar transporter family. In terms of assembly, forms heterooligomers with SWEET11, SWEET13 and SWEET17.

The protein localises to the cell membrane. Functionally, mediates both low-affinity uptake and efflux of sugar across the plasma membrane. This chain is Bidirectional sugar transporter SWEET3, found in Arabidopsis thaliana (Mouse-ear cress).